A 331-amino-acid polypeptide reads, in one-letter code: MKTNAVAFEKFVNLADARLGTKIISVTDDWFADANRLFQPTPAVWKEGIFDDNGKWMDGWESRRKRFEGYDSAVIRLGVAGSIKGVDIDTSFFTGNFPPSASLEACFLAAGEPDENTQWTEVLPAVELQGNSHHYHEIHNHQPFSHLRFNIYPDGGVARLRVYGIPYRDWSAIGDDEQVDLAAALNGGRALACSDEHFGRMGNLLNPGRGINMGDGWETARRRTPGNDWVIIALGHAGEIEKIIVDTLHFKGNYPDSCSIQGAFVKGGTDSQIETQSLFWRELLPSQKLEMHAEHSFVEQIRALGPITHVRLNVFPDGGVSRLRLLGKVKK.

This sequence belongs to the allantoicase family.

It carries out the reaction allantoate + H2O = (S)-ureidoglycolate + urea. It participates in nitrogen metabolism; (S)-allantoin degradation; (S)-ureidoglycolate from allantoate (aminidohydrolase route): step 1/1. The polypeptide is Probable allantoicase (Pseudomonas fluorescens (strain ATCC BAA-477 / NRRL B-23932 / Pf-5)).